A 67-amino-acid polypeptide reads, in one-letter code: Protein AaeX (67 aa).

2 consecutive transmembrane segments (helical) span residues 10-30 and 43-63; these read FGLSFPPVFFVLMVSLTLFFV and FVWHPALFNSALFCCLFYLLF.

Belongs to the AaeX family.

The protein localises to the cell membrane. The chain is Protein AaeX from Pectobacterium atrosepticum (strain SCRI 1043 / ATCC BAA-672) (Erwinia carotovora subsp. atroseptica).